The sequence spans 1248 residues: Apoptotic protease-activating factor 1 (1248 aa).

One can recognise a CARD domain in the interval 1-90 (MDAKARNCLL…KDLAALLHDG (90 aa)). The region spanning 104-415 (SGITSYVRTV…METEEVEDIL (312 aa)) is the NB-ARC domain. ATP-binding positions include 154–161 (GMAGCGKS) and Arg-265. The WD 1-1 repeat unit spans residues 613–652 (PHTDAVYHACFSEDGQRIASCGADKTLQVFKAETGEKLLE). A WD 1-2 repeat occupies 655 to 694 (AHEDEVLCCAFSTDDRFIATCSVDKKVKIWNSMTGELVHT). A WD 1-3 repeat occupies 697-738 (EHSEQVNCCHFTNSSHHLLLATGSSDCFLKLWDLNQKECRNT). The stretch at 741–780 (GHTNSVNHCRFSPDDKLLASCSADGTLKLWDATSANERKS) is one WD 1-4 repeat. A WD 1-5 repeat occupies 796–836 (DMEVIVKCCSWSADGARIMVAAKNKIFLFDIHTSGLLGEIH). The WD 1-6 repeat unit spans residues 838–877 (GHHSTIQYCDFSPQNHLAVVALSQYCVELWNTDSRSKVAD). Residues 880–910 (GHLSWVHGVMFSPDGSSFLTSSDDQTIRLWE) form a WD 1-7 repeat. The segment at 910–921 (ETKKVCKNSAVM) is interpropeller linker. The WD 2-1 repeat unit spans residues 922–958 (LKQEVDVVFQENEVMVLAVDHIRRLQLINGRTGQIDY). A WD 2-2 repeat occupies 959–998 (LTEAQVSCCCLSPHLQYIAFGDENGAIEILELVNNRIFQS). The stretch at 1001 to 1040 (QHKKTVWHIQFTADEKTLISSSDDAEIQVWNWQLDKCIFL) is one WD 2-3 repeat. The WD 2-4 repeat unit spans residues 1042-1080 (GHQETVKDFRLLKNSRLLSWSFDGTVKVWNIITGNKEKD). The WD 2-5 repeat unit spans residues 1083–1122 (CHQGTVLSCDISHDATKFSSTSADKTAKIWSFDLLLPLHE). The WD 2-6 repeat unit spans residues 1125–1164 (GHNGCVRCSAFSVDSTLLATGDDNGEIRIWNVSNGELLHL). The stretch at 1175 to 1212 (THGGWVTDLCFSPDGKMLISAGGYIKWWNVVTGESSQT) is one WD 2-7 repeat. One copy of the WD 2-8 repeat lies at 1213-1248 (FYTNGTNLKKIHVSPDFKTYVTVDNLGILYILQTLE).

Monomer. Oligomerizes to a heptameric ring, known as the apoptosome, upon binding of cytochrome c and dATP. Oligomeric Apaf-1 and pro-caspase-9 bind to each other via their respective NH2-terminal CARD domains and consecutively mature caspase-9 is released from the complex. Pro-caspase-3 is recruited into the Apaf-1-pro-caspase-9 complex via interaction with pro-caspase-9. Interacts with APIP. Interacts (via CARD and NACHT domains) with NAIP/BIRC1 (via NACHT domain). Interacts with CIAO2A. Ubiquitous. Highest levels of expression in adult spleen and peripheral blood leukocytes, and in fetal brain, kidney and lung. Isoform 1 is expressed in heart, kidney and liver.

It localises to the cytoplasm. Its function is as follows. Oligomeric Apaf-1 mediates the cytochrome c-dependent autocatalytic activation of pro-caspase-9 (Apaf-3), leading to the activation of caspase-3 and apoptosis. This activation requires ATP. Isoform 6 is less effective in inducing apoptosis. In Homo sapiens (Human), this protein is Apoptotic protease-activating factor 1.